A 159-amino-acid chain; its full sequence is SsrA-binding protein (159 aa).

This sequence belongs to the SmpB family.

It localises to the cytoplasm. Required for rescue of stalled ribosomes mediated by trans-translation. Binds to transfer-messenger RNA (tmRNA), required for stable association of tmRNA with ribosomes. tmRNA and SmpB together mimic tRNA shape, replacing the anticodon stem-loop with SmpB. tmRNA is encoded by the ssrA gene; the 2 termini fold to resemble tRNA(Ala) and it encodes a 'tag peptide', a short internal open reading frame. During trans-translation Ala-aminoacylated tmRNA acts like a tRNA, entering the A-site of stalled ribosomes, displacing the stalled mRNA. The ribosome then switches to translate the ORF on the tmRNA; the nascent peptide is terminated with the 'tag peptide' encoded by the tmRNA and targeted for degradation. The ribosome is freed to recommence translation, which seems to be the essential function of trans-translation. This is SsrA-binding protein from Coxiella burnetii (strain RSA 493 / Nine Mile phase I).